Consider the following 130-residue polypeptide: Histone H2A type 1-D (130 aa).

A disordered region spans residues 1-22 (MSGRGKQGGKARAKAKTRSSRA). Serine 2 is modified (N-acetylserine). The residue at position 2 (serine 2) is a Phosphoserine; by RPS6KA5. Citrulline; alternate is present on arginine 4. The residue at position 4 (arginine 4) is a Symmetric dimethylarginine; by PRMT5; alternate. N6-(2-hydroxyisobutyryl)lysine; alternate is present on residues lysine 6 and lysine 10. Lysine 6 bears the N6-acetyllysine; alternate mark. A compositionally biased stretch (basic residues) spans 7–19 (QGGKARAKAKTRS). Residues lysine 10 and lysine 14 each carry the N6-(beta-hydroxybutyryl)lysine; alternate modification. Residue lysine 10 is modified to N6-lactoyllysine; alternate. Lysine 10 bears the N6-succinyllysine; alternate mark. Lysine 14 is covalently cross-linked (Glycyl lysine isopeptide (Lys-Gly) (interchain with G-Cter in ubiquitin); alternate). Lysine 16 is covalently cross-linked (Glycyl lysine isopeptide (Lys-Gly) (interchain with G-Cter in ubiquitin)). Lysine 37 carries the post-translational modification N6-(2-hydroxyisobutyryl)lysine; alternate. Lysine 37 is modified (N6-(beta-hydroxybutyryl)lysine; alternate). Lysine 37 carries the N6-crotonyllysine; alternate modification. An N6-(2-hydroxyisobutyryl)lysine mark is found at lysine 75 and lysine 76. N6-(2-hydroxyisobutyryl)lysine; alternate is present on lysine 96. Lysine 96 carries the N6-(beta-hydroxybutyryl)lysine; alternate modification. N6-succinyllysine; alternate is present on lysine 96. Lysine 96 carries the N6-glutaryllysine; alternate modification. An N6-glutaryllysine modification is found at lysine 100. Glutamine 105 carries the post-translational modification N5-methylglutamine. At lysine 119 the chain carries N6-(2-hydroxyisobutyryl)lysine; alternate. Lysine 119 is subject to N6-(beta-hydroxybutyryl)lysine; alternate. An N6-crotonyllysine; alternate mark is found at lysine 119 and lysine 120. An N6-glutaryllysine; alternate mark is found at lysine 119 and lysine 120. Lysine 120 is covalently cross-linked (Glycyl lysine isopeptide (Lys-Gly) (interchain with G-Cter in ubiquitin); alternate). Residue threonine 121 is modified to Phosphothreonine; by DCAF1. Lysine 126 carries the N6-crotonyllysine; alternate modification. Position 126 is an N6-glutaryllysine; alternate (lysine 126).

Belongs to the histone H2A family. The nucleosome is a histone octamer containing two molecules each of H2A, H2B, H3 and H4 assembled in one H3-H4 heterotetramer and two H2A-H2B heterodimers. The octamer wraps approximately 147 bp of DNA. Deiminated on Arg-4 in granulocytes upon calcium entry. In terms of processing, monoubiquitination of Lys-120 (H2AK119Ub) by RING1, TRIM37 and RNF2/RING2 complex gives a specific tag for epigenetic transcriptional repression and participates in X chromosome inactivation of female mammals. It is involved in the initiation of both imprinted and random X inactivation. Ubiquitinated H2A is enriched in inactive X chromosome chromatin. Ubiquitination of H2A functions downstream of methylation of 'Lys-27' of histone H3 (H3K27me). H2AK119Ub by RNF2/RING2 can also be induced by ultraviolet and may be involved in DNA repair. Monoubiquitination of Lys-120 (H2AK119Ub) by TRIM37 may promote transformation of cells in a number of breast cancers. Following DNA double-strand breaks (DSBs), it is ubiquitinated through 'Lys-63' linkage of ubiquitin moieties by the E2 ligase UBE2N and the E3 ligases RNF8 and RNF168, leading to the recruitment of repair proteins to sites of DNA damage. Ubiquitination at Lys-14 and Lys-16 (H2AK13Ub and H2AK15Ub, respectively) in response to DNA damage is initiated by RNF168 that mediates monoubiquitination at these 2 sites, and 'Lys-63'-linked ubiquitin are then conjugated to monoubiquitin; RNF8 is able to extend 'Lys-63'-linked ubiquitin chains in vitro. Deubiquitinated by USP51 at Lys-14 and Lys-16 (H2AK13Ub and H2AK15Ub, respectively) after damaged DNA is repaired. H2AK119Ub and ionizing radiation-induced 'Lys-63'-linked ubiquitination (H2AK13Ub and H2AK15Ub) are distinct events. Post-translationally, phosphorylation on Ser-2 (H2AS1ph) is enhanced during mitosis. Phosphorylation on Ser-2 by RPS6KA5/MSK1 directly represses transcription. Acetylation of H3 inhibits Ser-2 phosphorylation by RPS6KA5/MSK1. Phosphorylation at Thr-121 (H2AT120ph) by DCAF1 is present in the regulatory region of many tumor suppresor genes and down-regulates their transcription. Glutamine methylation at Gln-105 (H2AQ104me) by FBL is specifically dedicated to polymerase I. It is present at 35S ribosomal DNA locus and impairs binding of the FACT complex. In terms of processing, symmetric dimethylation on Arg-4 by the PRDM1/PRMT5 complex may play a crucial role in the germ-cell lineage. Post-translationally, crotonylation (Kcr) is specifically present in male germ cells and marks testis-specific genes in post-meiotic cells, including X-linked genes that escape sex chromosome inactivation in haploid cells. Crotonylation marks active promoters and enhancers and confers resistance to transcriptional repressors. It is also associated with post-meiotically activated genes on autosomes. Lactylated in macrophages by EP300/P300 by using lactoyl-CoA directly derived from endogenous or exogenous lactate, leading to stimulates gene transcription.

Its subcellular location is the nucleus. The protein resides in the chromosome. Functionally, core component of nucleosome. Nucleosomes wrap and compact DNA into chromatin, limiting DNA accessibility to the cellular machineries which require DNA as a template. Histones thereby play a central role in transcription regulation, DNA repair, DNA replication and chromosomal stability. DNA accessibility is regulated via a complex set of post-translational modifications of histones, also called histone code, and nucleosome remodeling. This is Histone H2A type 1-D from Homo sapiens (Human).